The chain runs to 82 residues: Cytochrome b559 subunit alpha (82 aa).

The chain crosses the membrane as a helical span at residues 21-35 (VIHSITIPALFIAGW). Histidine 23 is a heme binding site.

The protein belongs to the PsbE/PsbF family. Heterodimer of an alpha subunit and a beta subunit. PSII is composed of 1 copy each of membrane proteins PsbA, PsbB, PsbC, PsbD, PsbE, PsbF, PsbH, PsbI, PsbJ, PsbK, PsbL, PsbM, PsbT, PsbX, PsbY, PsbZ, Psb30/Ycf12, peripheral proteins PsbO, CyanoQ (PsbQ), PsbU, PsbV and a large number of cofactors. It forms dimeric complexes. Heme b serves as cofactor.

Its subcellular location is the cellular thylakoid membrane. Its function is as follows. This b-type cytochrome is tightly associated with the reaction center of photosystem II (PSII). PSII is a light-driven water:plastoquinone oxidoreductase that uses light energy to abstract electrons from H(2)O, generating O(2) and a proton gradient subsequently used for ATP formation. It consists of a core antenna complex that captures photons, and an electron transfer chain that converts photonic excitation into a charge separation. The protein is Cytochrome b559 subunit alpha of Nostoc sp. (strain PCC 7120 / SAG 25.82 / UTEX 2576).